Reading from the N-terminus, the 869-residue chain is Histone deacetylase 4 (869 aa).

3 disordered regions span residues 1–25 (MEEASSSTGSAGGAGPSVPNLPSTS), 128–167 (SSSNGNLSVPQTPTKEHHPTAPTSNRKCDLPRSNSTTISQ), and 180–218 (RSKGESNSQSNLMSNSVTANGNGHDNGRKLKNSNSQVNV). A compositionally biased stretch (polar residues) spans 184–202 (ESNSQSNLMSNSVTANGNG). A Phosphoserine modification is found at Ser-251. The interval 460–802 (CTTGLGYDQA…VQALIGESDD (343 aa)) is histone deacetylase. Residue His-608 is part of the active site.

It belongs to the histone deacetylase family. HD type 2 subfamily. As to quaternary structure, interacts with mef-2. Post-translationally, phosphorylated by serine/threonine-protein kinase kin-29 at Ser-251; the phosphorylation inhibits repression of transcription by mef-2. May be phosphorylated by either cyclic-AMP dependent or cyclic-GMP dependent protein kinases. Expressed in body-wall muscle cells, hypodermal seam cells and neuronal cells including sensory amphid neuronal processes, the nerve ring, ventral nerve cords and motor neuronal commissures.

The protein localises to the nucleus. The enzyme catalyses N(6)-acetyl-L-lysyl-[histone] + H2O = L-lysyl-[histone] + acetate. In terms of biological role, responsible for the deacetylation of lysine residues on the N-terminal part of the core histones (H2A, H2B, H3 and H4). Histone deacetylation gives a tag for epigenetic repression and plays an important role in transcriptional regulation, cell cycle progression and developmental events. Histone deacetylases act via the formation of large multiprotein complexes. Involved in transduction of sensory signals, together with egl-4, kin-29 and mef-2; binding to transcription factor mef-2 enables negative modulation of chemoreceptor gene expression in chemosensory neurons. May be involved in muscle development. This chain is Histone deacetylase 4 (hda-4), found in Caenorhabditis elegans.